Consider the following 157-residue polypeptide: Protein TIFY 8 (157 aa).

The 36-residue stretch at valine 33 to leucine 68 folds into the Tify domain. The segment at serine 126 to serine 147 is disordered. Basic residues predominate over residues serine 137–serine 147.

It belongs to the TIFY/JAZ family. Ubiquitinated. Targeted for degradation by the SCF(COI1) E3 ubiquitin ligase-proteasome pathway during jasmonate signaling.

Its function is as follows. Repressor of jasmonate responses. The protein is Protein TIFY 8 of Oryza sativa subsp. japonica (Rice).